The sequence spans 238 residues: Probable xyloglucan-specific endo-beta-1,4-glucanase A (238 aa).

An N-terminal signal peptide occupies residues 1-18 (MKFSLSVALSLAAATAQA). N-linked (GlcNAc...) asparagine glycosylation is found at N106 and N171.

It belongs to the glycosyl hydrolase 12 (cellulase H) family.

Its subcellular location is the secreted. It carries out the reaction xyloglucan + H2O = xyloglucan oligosaccharides.. In terms of biological role, catalyzes endohydrolysis of 1,4-beta-D-glucosidic linkages in xyloglucan with retention of the beta-configuration of the glycosyl residues. Specific for xyloglucan and does not hydrolyze other cell wall components. This chain is Probable xyloglucan-specific endo-beta-1,4-glucanase A (xgeA), found in Neosartorya fischeri (strain ATCC 1020 / DSM 3700 / CBS 544.65 / FGSC A1164 / JCM 1740 / NRRL 181 / WB 181) (Aspergillus fischerianus).